The chain runs to 231 residues: Protein N-terminal glutamine amidohydrolase (231 aa).

Residues 1-21 (MADDRVAGGATPPPPPPPPPL) are disordered. Residues 11-21 (TPPPPPPPPPL) are compositionally biased toward pro residues. Active-site residues include Cys33, His89, and Asp108.

Belongs to the NTAQ1 family. As to quaternary structure, monomer.

It carries out the reaction N-terminal L-glutaminyl-[protein] + H2O = N-terminal L-glutamyl-[protein] + NH4(+). Its function is as follows. Mediates the side-chain deamidation of N-terminal glutamine residues to glutamate, an important step in N-end rule pathway of protein degradation. Conversion of the resulting N-terminal glutamine to glutamate renders the protein susceptible to arginylation, polyubiquitination and degradation as specified by the N-end rule. Does not act on substrates with internal or C-terminal glutamine and does not act on non-glutamine residues in any position. The protein is Protein N-terminal glutamine amidohydrolase of Oryza sativa subsp. indica (Rice).